Reading from the N-terminus, the 283-residue chain is Phosphate import ATP-binding protein PstB (283 aa).

The span at 1 to 20 (MAQTLAQTKQISQSHTFDVS) shows a compositional bias: polar residues. Positions 1–32 (MAQTLAQTKQISQSHTFDVSQSHHKTPDDTNS) are disordered. Residues 37–278 (YSTQNLDLWY…PSNKKTEDYI (242 aa)) enclose the ABC transporter domain. 69-76 (GPSGCGKS) is a binding site for ATP.

This sequence belongs to the ABC transporter superfamily. Phosphate importer (TC 3.A.1.7) family. The complex is composed of two ATP-binding proteins (PstB), two transmembrane proteins (PstC and PstA) and a solute-binding protein (PstS).

Its subcellular location is the cell membrane. The catalysed reaction is phosphate(out) + ATP + H2O = ADP + 2 phosphate(in) + H(+). In terms of biological role, part of the ABC transporter complex PstSACB involved in phosphate import. Responsible for energy coupling to the transport system. This Staphylococcus aureus (strain USA300) protein is Phosphate import ATP-binding protein PstB.